Reading from the N-terminus, the 883-residue chain is Phosphoenolpyruvate carboxylase (883 aa).

Catalysis depends on residues histidine 138 and lysine 546.

Belongs to the PEPCase type 1 family. It depends on Mg(2+) as a cofactor.

The enzyme catalyses oxaloacetate + phosphate = phosphoenolpyruvate + hydrogencarbonate. Functionally, forms oxaloacetate, a four-carbon dicarboxylic acid source for the tricarboxylic acid cycle. The chain is Phosphoenolpyruvate carboxylase from Escherichia coli O45:K1 (strain S88 / ExPEC).